We begin with the raw amino-acid sequence, 119 residues long: U-scoloptoxin(01)-Er1a (119 aa).

Residues 1–22 (MEIHSNIILLLLIALFAIFVKM) form the signal peptide. The Chitin-binding type-2 domain occupies 39–97 (NFACSGKKPGFYADEGFDCQVYHMCSPEGQLTTYLCGPGTIFNQKKLVCDLPTNYNCAD). Cys74 and Cys87 form a disulfide bridge.

Belongs to the scoloptoxin-01 family. In terms of processing, contains 3 disulfide bonds. Expressed by the venom gland.

It localises to the secreted. This chain is U-scoloptoxin(01)-Er1a, found in Ethmostigmus rubripes (Giant centipede).